The chain runs to 258 residues: MAIELGERISTSVGFLAELFLMKIPLFTVIVALLTIILGIVNIFLPIVDFFGLSWHNLINIRLHTLNTYPLVHHGVISFILGLLGIFLLMPRFERRYGTLCTIAMFFGFLEVIPAIAYLIACYVAESDDVYVGIGGWVYSLLAMYLLNLFGDLHPKLLNLPQVVRMALALVAPVLGLPLDFSITIVLHLTAVVISIIFSFAYMDFFLPRGGFLVWVETKFSKIIDAIPNYISVTEAAYYQADGAIPIQDLGSNSSGIV.

Transmembrane regions (helical) follow at residues 24–44 (IPLF…VNIF), 70–90 (PLVH…FLLM), 100–120 (LCTI…AYLI), 130–150 (VYVG…LNLF), 157–177 (LLNL…VLGL), and 181–201 (FSIT…FSFA). Residue His-188 is part of the active site.

It belongs to the peptidase S54 family.

The protein localises to the golgi apparatus membrane. This is an uncharacterized protein from Schizosaccharomyces pombe (strain 972 / ATCC 24843) (Fission yeast).